The sequence spans 184 residues: H(2)/formate:CoB-CoM heterodisulfide,ferredoxin reductase subunit C2 (184 aa).

4Fe-4S ferredoxin-type domains are found at residues 24–54 (GEKE…AYRT) and 65–97 (IDSV…TEII). Residues cysteine 34, cysteine 37, cysteine 40, cysteine 44, cysteine 77, cysteine 80, cysteine 83, and cysteine 87 each coordinate [4Fe-4S] cluster.

This sequence belongs to the HdrC family. As to quaternary structure, the heterodisulfide reductase is composed of three subunits; HdrA, HdrB and HdrC. B1 and B2 subunits are interchangeable, as are the C1 and C2 subunits. The heterodisulfide reductase forms a supercomplex with formylmethanofuran dehydrogenase (Fwd), F(420)-non-reducing hydrogenase (Vhu) and formate dehydrogenase (Fdh). The cofactor is [4Fe-4S] cluster.

It catalyses the reaction coenzyme B + coenzyme M + 2 reduced [2Fe-2S]-[ferredoxin] + 2 H(+) = coenzyme M-coenzyme B heterodisulfide + 2 H2 + 2 oxidized [2Fe-2S]-[ferredoxin]. The enzyme catalyses coenzyme B + coenzyme M + 2 reduced [2Fe-2S]-[ferredoxin] + 2 CO2 = coenzyme M-coenzyme B heterodisulfide + 2 formate + 2 oxidized [2Fe-2S]-[ferredoxin]. The protein operates within cofactor metabolism; coenzyme M-coenzyme B heterodisulfide reduction; coenzyme B and coenzyme M from coenzyme M-coenzyme B heterodisulfide: step 1/1. Its function is as follows. Part of a complex that catalyzes the reversible reduction of CoM-S-S-CoB to the thiol-coenzymes H-S-CoM (coenzyme M) and H-S-CoB (coenzyme B). In Methanococcus maripaludis (strain DSM 14266 / JCM 13030 / NBRC 101832 / S2 / LL), this protein is H(2)/formate:CoB-CoM heterodisulfide,ferredoxin reductase subunit C2.